Here is a 154-residue protein sequence, read N- to C-terminus: Transcriptional repressor NrdR (154 aa).

Residues 3-34 (CPFCGANDTKVIDSRLVAEGEQVRRRRECLAC) fold into a zinc finger. An ATP-cone domain is found at 49-139 (PRLIKTDGSR…VYRRFQDLNE (91 aa)).

Belongs to the NrdR family. The cofactor is Zn(2+).

Negatively regulates transcription of bacterial ribonucleotide reductase nrd genes and operons by binding to NrdR-boxes. The sequence is that of Transcriptional repressor NrdR from Pseudomonas fluorescens (strain ATCC BAA-477 / NRRL B-23932 / Pf-5).